The sequence spans 124 residues: Small ribosomal subunit protein uS13 (124 aa).

The disordered stretch occupies residues 99-124 (RGQRTRTNARTRKGPRKTVGVMRKKS). Residues 101-124 (QRTRTNARTRKGPRKTVGVMRKKS) are compositionally biased toward basic residues.

Belongs to the universal ribosomal protein uS13 family. As to quaternary structure, part of the 30S ribosomal subunit. Forms a loose heterodimer with protein S19. Forms two bridges to the 50S subunit in the 70S ribosome.

Located at the top of the head of the 30S subunit, it contacts several helices of the 16S rRNA. In the 70S ribosome it contacts the 23S rRNA (bridge B1a) and protein L5 of the 50S subunit (bridge B1b), connecting the 2 subunits; these bridges are implicated in subunit movement. Contacts the tRNAs in the A and P-sites. The sequence is that of Small ribosomal subunit protein uS13 from Caldicellulosiruptor saccharolyticus (strain ATCC 43494 / DSM 8903 / Tp8T 6331).